The primary structure comprises 101 residues: Small ribosomal subunit protein uS14 (101 aa).

It belongs to the universal ribosomal protein uS14 family. Part of the 30S ribosomal subunit. Contacts proteins S3 and S10.

Binds 16S rRNA, required for the assembly of 30S particles and may also be responsible for determining the conformation of the 16S rRNA at the A site. The polypeptide is Small ribosomal subunit protein uS14 (Alteromonas mediterranea (strain DSM 17117 / CIP 110805 / LMG 28347 / Deep ecotype)).